Consider the following 134-residue polypeptide: UPF0412 protein YaaI (134 aa).

A signal peptide spans 1–23 (MKSVFTLSASLAISLLLCCTAQA).

It belongs to the UPF0412 family.

This Escherichia coli O7:K1 (strain IAI39 / ExPEC) protein is UPF0412 protein YaaI.